Here is a 208-residue protein sequence, read N- to C-terminus: MAQETNHSQVPMLCSTGCGFYGNPRTNGMCSVCYKEHLQRQNSSNGRISPPATSVSSLSESLPVQCTDGSVPEAQSALDSTSSSMQPSPVSNQSLLSESVASSQLDSTSVDKAVPETEDVQASVSDTAQQPSEEQSKSLEKPKQKKNRCFMCRKKVGLTGFECRCGNVYCGVHRYSDVHNCSYNYKADAAEKIRKENPVVVGEKIQKI.

The A20-type zinc-finger motif lies at 8–42 (SQVPMLCSTGCGFYGNPRTNGMCSVCYKEHLQRQN). Positions 14, 18, 30, and 33 each coordinate Zn(2+). Positions 41-68 (QNSSNGRISPPATSVSSLSESLPVQCTD) are enriched in polar residues. Residues 41-140 (QNSSNGRISP…PSEEQSKSLE (100 aa)) form a disordered region. Serine 49 is modified (phosphoserine). Low complexity predominate over residues 80–94 (STSSSMQPSPVSNQS). Polar residues-rich tracts occupy residues 95–110 (LLSE…STSV) and 120–133 (VQAS…QPSE). The AN1-type zinc finger occupies 143–189 (KQKKNRCFMCRKKVGLTGFECRCGNVYCGVHRYSDVHNCSYNYKADA). Residues cysteine 149, cysteine 152, cysteine 163, cysteine 165, cysteine 170, histidine 173, histidine 179, and cysteine 181 each contribute to the Zn(2+) site. An N6-acetyllysine modification is found at lysine 204.

Interacts with PKN1. Interacts with TRAF2. Interacts with mono- and polyubiquitin. Interacts with PEX6. Interacts with PEX5 (Cys-linked ubiquitinated). As to expression, widely expressed with high level in heart, skeletal muscle, liver, kidney and placenta.

It is found in the cytoplasm. In terms of biological role, involved in regulation of TNF-alpha induced NF-kappa-B activation and apoptosis. Involved in modulation of 'Lys-48'-linked polyubiquitination status of TRAF2 and decreases association of TRAF2 with RIPK1. Required for PTS1 target sequence-dependent protein import into peroxisomes and PEX5 stability; may cooperate with PEX6. In vitro involved in PEX5 export from the cytosol to peroxisomes. This chain is AN1-type zinc finger protein 6 (ZFAND6), found in Homo sapiens (Human).